Here is a 1028-residue protein sequence, read N- to C-terminus: Contactin-3 (1028 aa).

Positions methionine 1 to glycine 19 are cleaved as a signal peptide. Ig-like C2-type domains lie at proline 26–glutamine 117, glutamate 122–leucine 208, proline 227–threonine 313, proline 318–lysine 402, proline 408–threonine 497, and proline 499–isoleucine 593. Cystine bridges form between cysteine 50-cysteine 100, cysteine 144-cysteine 196, cysteine 249-cysteine 297, cysteine 339-cysteine 386, and cysteine 431-cysteine 479. 2 N-linked (GlcNAc...) asparagine glycosylation sites follow: asparagine 65 and asparagine 193. Residues asparagine 377, asparagine 468, asparagine 489, and asparagine 538 are each glycosylated (N-linked (GlcNAc...) asparagine). Cysteine 521 and cysteine 577 are joined by a disulfide. Fibronectin type-III domains follow at residues proline 600–alanine 698, alanine 703–glutamate 800, alanine 805–threonine 901, and proline 902–aspartate 998. A disordered region spans residues glycine 684–arginine 714. Asparagine 765, asparagine 860, asparagine 895, asparagine 913, asparagine 931, and asparagine 956 each carry an N-linked (GlcNAc...) asparagine glycan. Residue serine 1002 is the site of GPI-anchor amidated serine attachment. Positions threonine 1003–tryptophan 1028 are cleaved as a propeptide — removed in mature form.

Belongs to the immunoglobulin superfamily. Contactin family. Interacts with PTPRG. In terms of tissue distribution, specifically expressed in brain. Not expressed in peripheral tissues such as heart, lung, liver, spleen, kidney and skeletal muscle. In brain, it is restricted to subsets of neurons such as Purkinje cells of the cerebellum, granule cells of the dentate gyrus, and neurons in the superficial layers of the cerebral cortex.

Its subcellular location is the cell membrane. Its function is as follows. Contactins mediate cell surface interactions during nervous system development. Has some neurite outgrowth-promoting activity. In Rattus norvegicus (Rat), this protein is Contactin-3 (Cntn3).